The chain runs to 134 residues: RuBisCO chaperone RbcX (134 aa).

The interval 97–134 (SNGNHRRSLLERLTQVDSSSTDQTEPNPGESDTSEDSE) is disordered. Polar residues predominate over residues 111-122 (QVDSSSTDQTEP).

It belongs to the RbcX family. As to quaternary structure, homodimer (RbcX2). Interacts with the exposed C-terminal peptide of RbcL ('Glu-459-Asp-468'); binds 2 RbcL peptides per RbcX2, stapling them into an RbcL2 dimer. A slightly longer peptide binds with a higher affinity, but no long-term stable interaction with RbcL is detected. Contacts a second RbcL monomer via its peripheral polar surface.

It localises to the carboxysome. The protein localises to the cytoplasm. In terms of biological role, an RbcL-specific chaperone. Required for assembly of the RbcL8 core, acting downstream of the major chaperonin (GroEL-GroES). Acts on newly folded RbcL, has a transient dynamic interaction with RbcL and is eventually displaced by RbcS. The central cleft of the RbcX homodimer (RbcX2) binds the C-terminus of an RbcL monomer, stabilizing the C-terminus and probably preventing its reassociation with chaperonin GroEL-ES. At the same time the peripheral region of RbcX2 binds a second RbcL monomer, bridging the RbcL homodimers in the correct orientation. The RbcX2(2)-bound RbcL dimers then assemble into the RbcL8 core (RbcL8-(RbcX2)8). RbcS binding triggers the release of RbcX2. Required for optimal reconstitution of RuBisCO into its RbcL8S8 holoenzyme form upon expression of rbcL-rbcS subunits in E.coli, and probably also in situ. A frameshift mutation that replaces half the protein reduces accumulation of both RbcL and RbcS subunits and halves activity of RuBisCO in situ and in E.coli. The chain is RuBisCO chaperone RbcX from Picosynechococcus sp. (strain ATCC 27264 / PCC 7002 / PR-6) (Agmenellum quadruplicatum).